A 172-amino-acid chain; its full sequence is MSQRPNPSALIWLLLSVLVVGLDQWSKAWVLSSLPEYTPVPVIDGFWNWYRTYNTGAAFSFLSDAGGWQLWFFTALAVGISGLLAFWLSRTARGQWRSALPYALVIGGAIGNVIDRLMHGHVVDFIQWYIGSHTWPSFNIADSAIVGGAIGIAVFGLFDKSGKQEPGTGNLR.

The next 3 helical transmembrane spans lie at 10 to 30, 68 to 88, and 98 to 118; these read LIWL…KAWV, WQLW…AFWL, and SALP…DRLM. Residues aspartate 124 and aspartate 142 contribute to the active site. A helical transmembrane segment spans residues 138–158; sequence FNIADSAIVGGAIGIAVFGLF.

The protein belongs to the peptidase A8 family.

Its subcellular location is the cell inner membrane. It catalyses the reaction Release of signal peptides from bacterial membrane prolipoproteins. Hydrolyzes -Xaa-Yaa-Zaa-|-(S,diacylglyceryl)Cys-, in which Xaa is hydrophobic (preferably Leu), and Yaa (Ala or Ser) and Zaa (Gly or Ala) have small, neutral side chains.. The protein operates within protein modification; lipoprotein biosynthesis (signal peptide cleavage). Functionally, this protein specifically catalyzes the removal of signal peptides from prolipoproteins. This Xanthomonas euvesicatoria pv. vesicatoria (strain 85-10) (Xanthomonas campestris pv. vesicatoria) protein is Lipoprotein signal peptidase.